The primary structure comprises 317 residues: Putative ribosomal protein uL10-like (317 aa).

A Phosphotyrosine modification is found at Y24. T59 is modified (phosphothreonine). The disordered stretch occupies residues 292-317; the sequence is AAAPAKVEAKEESEESDEDMGFGLFD. K297 participates in a covalent cross-link: Glycyl lysine isopeptide (Lys-Gly) (interchain with G-Cter in SUMO1); alternate. A Glycyl lysine isopeptide (Lys-Gly) (interchain with G-Cter in SUMO2); alternate cross-link involves residue K297. The segment covering 302–311 has biased composition (acidic residues); the sequence is EESEESDEDM. S304 and S307 each carry phosphoserine.

The protein belongs to the universal ribosomal protein uL10 family. As to quaternary structure, P0 forms a pentameric complex by interaction with dimers of P1 and P2.

Its function is as follows. Ribosomal protein P0 is the functional equivalent of E.coli protein L10. The sequence is that of Putative ribosomal protein uL10-like (RPLP0P6) from Homo sapiens (Human).